A 94-amino-acid chain; its full sequence is PTS system galactitol-specific EIIB component (94 aa).

Residues 1–94 (MKRKIIVACG…QNKILTILQG (94 aa)) form the PTS EIIB type-2 domain. Cys9 serves as the catalytic Phosphocysteine intermediate; for EIIB activity. Cys9 carries the post-translational modification Phosphocysteine; by EIIA.

As to quaternary structure, forms a complex with one each of subunit of GatA, GatB and 2 subunits of GatC.

It is found in the cytoplasm. The enzyme catalyses galactitol(out) + N(pros)-phospho-L-histidyl-[protein] = galactitol 1-phosphate(in) + L-histidyl-[protein]. In terms of biological role, the phosphoenolpyruvate-dependent sugar phosphotransferase system (PTS), a major carbohydrate active transport system, catalyzes the phosphorylation of incoming sugar substrates concomitant with their translocation across the cell membrane. The enzyme II complex composed of GatA, GatB and GatC is involved in galactitol transport. It can also use D-glucitol. The chain is PTS system galactitol-specific EIIB component from Escherichia coli (strain K12).